The chain runs to 507 residues: Probable malate:quinone oxidoreductase 2 (507 aa).

This sequence belongs to the MQO family. FAD serves as cofactor.

The catalysed reaction is (S)-malate + a quinone = a quinol + oxaloacetate. It participates in carbohydrate metabolism; tricarboxylic acid cycle; oxaloacetate from (S)-malate (quinone route): step 1/1. The protein is Probable malate:quinone oxidoreductase 2 of Pseudomonas aeruginosa (strain ATCC 15692 / DSM 22644 / CIP 104116 / JCM 14847 / LMG 12228 / 1C / PRS 101 / PAO1).